We begin with the raw amino-acid sequence, 350 residues long: Anthranilate phosphoribosyltransferase (350 aa).

Residues Gly-82, 85–86, Ser-90, 92–95, 110–118, and Gly-122 each bind 5-phospho-alpha-D-ribose 1-diphosphate; these read GD, NVST, and KHGNRAVTG. Gly-82 is an anthranilate binding site. Ser-94 is a binding site for Mg(2+). Residue Asn-113 participates in anthranilate binding. Arg-168 contacts anthranilate. Residues Asp-232 and Glu-233 each coordinate Mg(2+).

It belongs to the anthranilate phosphoribosyltransferase family. As to quaternary structure, homodimer. Requires Mg(2+) as cofactor.

The catalysed reaction is N-(5-phospho-beta-D-ribosyl)anthranilate + diphosphate = 5-phospho-alpha-D-ribose 1-diphosphate + anthranilate. The protein operates within amino-acid biosynthesis; L-tryptophan biosynthesis; L-tryptophan from chorismate: step 2/5. Its function is as follows. Catalyzes the transfer of the phosphoribosyl group of 5-phosphorylribose-1-pyrophosphate (PRPP) to anthranilate to yield N-(5'-phosphoribosyl)-anthranilate (PRA). This Methanothermobacter marburgensis (strain ATCC BAA-927 / DSM 2133 / JCM 14651 / NBRC 100331 / OCM 82 / Marburg) (Methanobacterium thermoautotrophicum) protein is Anthranilate phosphoribosyltransferase.